A 296-amino-acid polypeptide reads, in one-letter code: Bidirectional sugar transporter SWEET13 (296 aa).

Over 1–9 (MAGLSLQHP) the chain is Extracellular. The chain crosses the membrane as a helical span at residues 10 to 30 (WAFAFGLLGNLISFTTYLAPI). In terms of domain architecture, MtN3/slv 1 spans 13-98 (AFGLLGNLIS…VMYLAYAPKK (86 aa)). Topologically, residues 31–45 (PTFYRIYKSKSTEGF) are cytoplasmic. The chain crosses the membrane as a helical span at residues 46 to 66 (QSVPYVVALFSAMLWIFYALI). Over 67–71 (KSNEA) the chain is Extracellular. A helical membrane pass occupies residues 72–92 (LLITINAAGCVIETIYIVMYL). Over 93 to 105 (AYAPKKAKVFTTK) the chain is Cytoplasmic. A helical transmembrane segment spans residues 106 to 126 (ILLLLNVGVFGVILLLTLLLS). Topologically, residues 127–133 (HGEQRVV) are extracellular. Residues 134 to 154 (SLGWVCVAFSVSVFVAPLSII) traverse the membrane as a helical segment. Positions 134–217 (SLGWVCVAFS…MGLYVFYMNA (84 aa)) constitute a MtN3/slv 2 domain. The Cytoplasmic segment spans residues 155-167 (KRVIQSRSVEYMP). The chain crosses the membrane as a helical span at residues 168–188 (FSLSLTLTLSAVVWFLYGLLI). Residues 189–192 (KDKY) are Extracellular-facing. The helical transmembrane segment at 193–213 (VALPNILGFTFGVVQMGLYVF) threads the bilayer. The Cytoplasmic segment spans residues 214–296 (YMNATPVAGE…PPRAVEVAAV (83 aa)).

This sequence belongs to the SWEET sugar transporter family. In terms of assembly, forms homooligomers and/or heterooligomers.

It is found in the cell membrane. Functionally, mediates both low-affinity uptake and efflux of sugar across the plasma membrane. Confers blight susceptibility. Confers TAL effector-mediated susceptibility to Xanthomonas oryzae pv. oryzae. The protein is Bidirectional sugar transporter SWEET13 (SWEET13) of Oryza sativa subsp. japonica (Rice).